A 425-amino-acid polypeptide reads, in one-letter code: MIQTIRGFRDILPGETPLWQTIERAASQLFEDFGFQEIRLPLIERTELFARSIGEVTDIVEKEMYTFPDRKGENITLRPEATASVVRSYIQHKMYAADPIQKLYTMGPMFRRERPQKGRYRQFFQINAEVFGIASPYIDAQLILLLNELFKRLGLTDLTAHLNSLGCRECRPLFHRALTEFLVSKQDRLCSDCRRRMDKNPLRTLDCKVPGCREAMQDAPTTLDHLCSDCSDHFTTVKATLKAQGVDFLVDKTLVRGLDYYSRTAFEIQTTALGAQSAVAGGGRYDALIKELGGPEVPAIGFAIGLDRLAEVMAQLKGCPAPRGPDLFIIPLGPGAMEKAYLCSSRLNLVGIRSETDYNGKSLKSLMKRADKLNAGHALILDYRQPDKNAPVLRNMKTREQVTLGLEDPTDEVIKILTNEGTLRD.

This sequence belongs to the class-II aminoacyl-tRNA synthetase family. In terms of assembly, homodimer.

It localises to the cytoplasm. It carries out the reaction tRNA(His) + L-histidine + ATP = L-histidyl-tRNA(His) + AMP + diphosphate + H(+). The protein is Histidine--tRNA ligase of Desulforapulum autotrophicum (strain ATCC 43914 / DSM 3382 / VKM B-1955 / HRM2) (Desulfobacterium autotrophicum).